Consider the following 180-residue polypeptide: Peptide deformylase (180 aa).

Fe cation-binding residues include Cys-96 and His-138. Glu-139 is a catalytic residue. His-142 is a Fe cation binding site.

Belongs to the polypeptide deformylase family. Fe(2+) serves as cofactor.

The enzyme catalyses N-terminal N-formyl-L-methionyl-[peptide] + H2O = N-terminal L-methionyl-[peptide] + formate. In terms of biological role, removes the formyl group from the N-terminal Met of newly synthesized proteins. Requires at least a dipeptide for an efficient rate of reaction. N-terminal L-methionine is a prerequisite for activity but the enzyme has broad specificity at other positions. The polypeptide is Peptide deformylase (Rhodopseudomonas palustris (strain BisA53)).